We begin with the raw amino-acid sequence, 123 residues long: MLPLCLTFLSFFLSLGGSFKAVMTKEEADGTTEAAACLFWIFNWTVTLIPLNSLVALAISSPTFFGDKPNGPIFGAKAAEAPTSPPTALKYKYLTSFGSNFGGILTIDLSFYWALGVALTGSK.

The first 24 residues, 1 to 24 (MLPLCLTFLSFFLSLGGSFKAVMT), serve as a signal peptide directing secretion. 2 consecutive transmembrane segments (helical) span residues 39-59 (FWIFNWTVTLIPLNSLVALAI) and 101-121 (FGGILTIDLSFYWALGVALTG).

Its subcellular location is the membrane. This is an uncharacterized protein from Saccharomyces cerevisiae (strain ATCC 204508 / S288c) (Baker's yeast).